Consider the following 412-residue polypeptide: Argininosuccinate synthase (412 aa).

ATP contacts are provided by residues 11–19 (AYSGGLDTS) and alanine 37. L-citrulline-binding residues include tyrosine 88 and serine 93. 116–124 (SHGATGKGN) is an ATP binding site. Residues threonine 120, asparagine 124, and aspartate 125 each contribute to the L-aspartate site. Asparagine 124 serves as a coordination point for L-citrulline. The L-citrulline site is built by arginine 128, serine 181, serine 190, glutamate 271, and tyrosine 283.

The protein belongs to the argininosuccinate synthase family. Homotetramer.

It localises to the cytoplasm. The protein resides in the cytosol. The enzyme catalyses L-citrulline + L-aspartate + ATP = 2-(N(omega)-L-arginino)succinate + AMP + diphosphate + H(+). It participates in amino-acid biosynthesis; L-arginine biosynthesis; L-arginine from L-ornithine and carbamoyl phosphate: step 2/3. The protein operates within nitrogen metabolism; urea cycle; (N(omega)-L-arginino)succinate from L-aspartate and L-citrulline: step 1/1. One of the enzymes of the urea cycle, the metabolic pathway transforming neurotoxic amonia produced by protein catabolism into inocuous urea in the liver of ureotelic animals. Catalyzes the formation of arginosuccinate from aspartate, citrulline and ATP and together with ASL it is responsible for the biosynthesis of arginine in most body tissues. In Xenopus tropicalis (Western clawed frog), this protein is Argininosuccinate synthase.